Here is a 623-residue protein sequence, read N- to C-terminus: Serine/threonine-protein kinase ArnS (623 aa).

2 helical membrane passes run 13-33 (MILISVFSYVLIALIVLGIVL) and 49-69 (VYLIGLTVYLNPGFSLTQSLI). A Protein kinase domain is found at 317 to 623 (YRVIEVIGLG…SYDIVKILEG (307 aa)). ATP-binding positions include 323–331 (IGLGGNGYV) and lysine 344. Aspartate 460 serves as the catalytic Proton acceptor.

The protein belongs to the protein kinase superfamily. Ser/Thr protein kinase family. Autophosphorylated.

It localises to the cell membrane. The catalysed reaction is L-seryl-[protein] + ATP = O-phospho-L-seryl-[protein] + ADP + H(+). It catalyses the reaction L-threonyl-[protein] + ATP = O-phospho-L-threonyl-[protein] + ADP + H(+). Its activity is regulated as follows. Autophosphorylation is stimulated by Mn(2+). Its function is as follows. Plays an essential role in the controlled expression of archaellum components during starvation-induced motility. May inhibit arnR transcription and promote ArnR translation. This Sulfolobus acidocaldarius (strain ATCC 33909 / DSM 639 / JCM 8929 / NBRC 15157 / NCIMB 11770) protein is Serine/threonine-protein kinase ArnS.